The sequence spans 164 residues: SsrA-binding protein (164 aa).

This sequence belongs to the SmpB family.

Its subcellular location is the cytoplasm. Functionally, required for rescue of stalled ribosomes mediated by trans-translation. Binds to transfer-messenger RNA (tmRNA), required for stable association of tmRNA with ribosomes. tmRNA and SmpB together mimic tRNA shape, replacing the anticodon stem-loop with SmpB. tmRNA is encoded by the ssrA gene; the 2 termini fold to resemble tRNA(Ala) and it encodes a 'tag peptide', a short internal open reading frame. During trans-translation Ala-aminoacylated tmRNA acts like a tRNA, entering the A-site of stalled ribosomes, displacing the stalled mRNA. The ribosome then switches to translate the ORF on the tmRNA; the nascent peptide is terminated with the 'tag peptide' encoded by the tmRNA and targeted for degradation. The ribosome is freed to recommence translation, which seems to be the essential function of trans-translation. The chain is SsrA-binding protein from Shewanella woodyi (strain ATCC 51908 / MS32).